Reading from the N-terminus, the 348-residue chain is ECA polysaccharide chain length modulation protein (348 aa).

2 helical membrane passes run 31 to 51 (FWII…TFFA) and 323 to 343 (AFLM…VALT).

It belongs to the WzzB/Cld/Rol family. In terms of assembly, probably part of a complex composed of WzxE, WzyE and WzzE.

It is found in the cell inner membrane. The protein operates within bacterial outer membrane biogenesis; enterobacterial common antigen biosynthesis. Functionally, modulates the polysaccharide chain length of enterobacterial common antigen (ECA). In Salmonella typhimurium (strain LT2 / SGSC1412 / ATCC 700720), this protein is ECA polysaccharide chain length modulation protein.